The chain runs to 187 residues: Adenine phosphoribosyltransferase (187 aa).

It belongs to the purine/pyrimidine phosphoribosyltransferase family. As to quaternary structure, homodimer.

It localises to the cytoplasm. The enzyme catalyses AMP + diphosphate = 5-phospho-alpha-D-ribose 1-diphosphate + adenine. It participates in purine metabolism; AMP biosynthesis via salvage pathway; AMP from adenine: step 1/1. Functionally, catalyzes a salvage reaction resulting in the formation of AMP, that is energically less costly than de novo synthesis. In Yersinia pseudotuberculosis serotype I (strain IP32953), this protein is Adenine phosphoribosyltransferase.